Here is a 585-residue protein sequence, read N- to C-terminus: Frizzled-5 (585 aa).

A signal peptide spans 1-26 (MARPDPSAPPSLLLLLLAQLVGRAAA). Over 27–238 (ASKAPVCQEI…ADERTFATFW (212 aa)) the chain is Extracellular. Positions 28-150 (SKAPVCQEIT…RDAEVLCMDY (123 aa)) constitute an FZ domain. 5 disulfide bridges follow: Cys33–Cys94, Cys41–Cys87, Cys78–Cys116, Cys105–Cys147, and Cys109–Cys133. Asn47 carries N-linked (GlcNAc...) asparagine glycosylation. Residue Asn151 is glycosylated (N-linked (GlcNAc...) asparagine). The interval 156–179 (TTAPPRPFPAKPTLPGPPGAPASG) is disordered. The segment covering 159-175 (PPRPFPAKPTLPGPPGA) has biased composition (pro residues). A helical transmembrane segment spans residues 239–259 (IGLWSVLCFISTSTTVATFLI). At 260 to 270 (DMERFRYPERP) the chain is on the cytoplasmic side. Residues 271 to 291 (IIFLSACYLCVSLGFLVRLVV) traverse the membrane as a helical segment. Residues 292 to 315 (GHASVACSREHNHIHYETTGPALC) are Extracellular-facing. Residues 316-336 (TIVFLLVYFFGMASSIWWVIL) form a helical membrane-spanning segment. Topologically, residues 337-358 (SLTWFLAAGMKWGNEAIAGYAQ) are cytoplasmic. The helical transmembrane segment at 359–379 (YFHLAAWLIPSVKSITALALS) threads the bilayer. Over 380 to 402 (SVDGDPVAGICYVGNQNLNSLRG) the chain is Extracellular. A helical membrane pass occupies residues 403 to 423 (FVLGPLVLYLLVGTLFLLAGF). The Cytoplasmic portion of the chain corresponds to 424 to 449 (VSLFRIRSVIKQGGTKTDKLEKLMIR). Residues 450–470 (IGIFTLLYTVPASIVVACYLY) form a helical membrane-spanning segment. The Extracellular segment spans residues 471 to 500 (EQHYRESWEAALTCACPGHDTGQPRAKPEY). Residues 501 to 521 (WVLMLKYFMCLVVGITSGVWI) traverse the membrane as a helical segment. Residues 522–585 (WSGKTVESWR…YHKQVSLSHV (64 aa)) lie on the Cytoplasmic side of the membrane. Positions 525-530 (KTVESW) match the Lys-Thr-X-X-X-Trp motif, mediates interaction with the PDZ domain of Dvl family members motif. The short motif at 583 to 585 (SHV) is the PDZ-binding element.

It belongs to the G-protein coupled receptor Fz/Smo family. In terms of assembly, binding of unsaturated fatty acid molecules (via FZ domain) promotes homodimerization. Interacts with WNT2B. Interacts with WNT3A. Interacts with WNT7A. Interacts with GOPC. In terms of processing, ubiquitinated by RNF43 and ZNRF3, leading to its degradation by the proteasome.

It is found in the cell membrane. It localises to the golgi apparatus membrane. The protein resides in the synapse. Its subcellular location is the perikaryon. The protein localises to the cell projection. It is found in the dendrite. It localises to the axon. Receptor for Wnt proteins. Functions in the canonical Wnt/beta-catenin signaling pathway. In vitro activates WNT2, WNT10B, WNT5A, but not WNT2B or WNT4 signaling. In neurons, activation by WNT7A promotes formation of synapses. May be involved in transduction and intercellular transmission of polarity information during tissue morphogenesis and/or in differentiated tissues. Plays a role in yolk sac angiogenesis and in placental vascularization. Plays a role in ocular development. The sequence is that of Frizzled-5 (FZD5) from Homo sapiens (Human).